The following is a 307-amino-acid chain: Aspartate carbamoyltransferase catalytic subunit (307 aa).

Carbamoyl phosphate-binding residues include R54 and T55. K83 serves as a coordination point for L-aspartate. Residues R104, H132, and Q135 each contribute to the carbamoyl phosphate site. L-aspartate is bound by residues R165 and R228. The carbamoyl phosphate site is built by L267 and P268.

This sequence belongs to the aspartate/ornithine carbamoyltransferase superfamily. ATCase family. Heterododecamer (2C3:3R2) of six catalytic PyrB chains organized as two trimers (C3), and six regulatory PyrI chains organized as three dimers (R2).

The catalysed reaction is carbamoyl phosphate + L-aspartate = N-carbamoyl-L-aspartate + phosphate + H(+). Its pathway is pyrimidine metabolism; UMP biosynthesis via de novo pathway; (S)-dihydroorotate from bicarbonate: step 2/3. In terms of biological role, catalyzes the condensation of carbamoyl phosphate and aspartate to form carbamoyl aspartate and inorganic phosphate, the committed step in the de novo pyrimidine nucleotide biosynthesis pathway. This is Aspartate carbamoyltransferase catalytic subunit from Clostridium perfringens (strain ATCC 13124 / DSM 756 / JCM 1290 / NCIMB 6125 / NCTC 8237 / Type A).